Reading from the N-terminus, the 520-residue chain is Calcium-dependent protein kinase 25 (520 aa).

Residue Gly2 is the site of N-myristoyl glycine attachment. A disordered region spans residues 31–87 (PLKPQLQDKPPQPMLMNKDDDKTKLNDTHGDPKLLEGKEKPAQKQTSQGQGGRKCSD). Basic and acidic residues predominate over residues 47–72 (NKDDDKTKLNDTHGDPKLLEGKEKPA). In terms of domain architecture, Protein kinase spans 132–390 (YNLGSKLGHG…AQQVLCHPWI (259 aa)). ATP is bound by residues 138-146 (LGHGQFGTT) and Lys161. The Proton acceptor role is filled by Asp256. Position 296 is a phosphoserine (Ser296). An autoinhibitory domain region spans residues 396 to 426 (APDTPLDTTVLSRLKKFSATDKLKKMALRVI). The region spanning 433–468 (EEIHELRETFKTIDSGKSGRVTYKELKNGLERFNTN) is the EF-hand 1 domain. Ca(2+) contacts are provided by Asp446, Ser450, Arg452, Glu457, Asp483, Glu487, Thr489, and Glu494. The 37-residue stretch at 469 to 505 (LDNSDINSLMQIPTDVHLEDTVDYNEFIEAIVRLRQI) folds into the EF-hand 2; degenerate domain.

It belongs to the protein kinase superfamily. Ser/Thr protein kinase family. CDPK subfamily.

It is found in the membrane. It carries out the reaction L-seryl-[protein] + ATP = O-phospho-L-seryl-[protein] + ADP + H(+). The catalysed reaction is L-threonyl-[protein] + ATP = O-phospho-L-threonyl-[protein] + ADP + H(+). With respect to regulation, activated by calcium. Autophosphorylation may play an important role in the regulation of the kinase activity. In terms of biological role, may play a role in signal transduction pathways that involve calcium as a second messenger. This chain is Calcium-dependent protein kinase 25 (CPK25), found in Arabidopsis thaliana (Mouse-ear cress).